The chain runs to 572 residues: Proline--tRNA ligase (572 aa).

This sequence belongs to the class-II aminoacyl-tRNA synthetase family. ProS type 1 subfamily. Homodimer.

It is found in the cytoplasm. It carries out the reaction tRNA(Pro) + L-proline + ATP = L-prolyl-tRNA(Pro) + AMP + diphosphate. Its function is as follows. Catalyzes the attachment of proline to tRNA(Pro) in a two-step reaction: proline is first activated by ATP to form Pro-AMP and then transferred to the acceptor end of tRNA(Pro). As ProRS can inadvertently accommodate and process non-cognate amino acids such as alanine and cysteine, to avoid such errors it has two additional distinct editing activities against alanine. One activity is designated as 'pretransfer' editing and involves the tRNA(Pro)-independent hydrolysis of activated Ala-AMP. The other activity is designated 'posttransfer' editing and involves deacylation of mischarged Ala-tRNA(Pro). The misacylated Cys-tRNA(Pro) is not edited by ProRS. The protein is Proline--tRNA ligase of Salmonella choleraesuis (strain SC-B67).